The chain runs to 174 residues: Peptide deformylase (174 aa).

The Fe cation site is built by C96 and H138. E139 is an active-site residue. H142 is a binding site for Fe cation.

It belongs to the polypeptide deformylase family. Fe(2+) is required as a cofactor.

It catalyses the reaction N-terminal N-formyl-L-methionyl-[peptide] + H2O = N-terminal L-methionyl-[peptide] + formate. Its function is as follows. Removes the formyl group from the N-terminal Met of newly synthesized proteins. Requires at least a dipeptide for an efficient rate of reaction. N-terminal L-methionine is a prerequisite for activity but the enzyme has broad specificity at other positions. This is Peptide deformylase from Nautilia profundicola (strain ATCC BAA-1463 / DSM 18972 / AmH).